The following is a 1070-amino-acid chain: DNA-directed RNA polymerase subunit beta (1070 aa).

The protein belongs to the RNA polymerase beta chain family. In plastids the minimal PEP RNA polymerase catalytic core is composed of four subunits: alpha, beta, beta', and beta''. When a (nuclear-encoded) sigma factor is associated with the core the holoenzyme is formed, which can initiate transcription.

It localises to the plastid. Its subcellular location is the chloroplast. The catalysed reaction is RNA(n) + a ribonucleoside 5'-triphosphate = RNA(n+1) + diphosphate. Its function is as follows. DNA-dependent RNA polymerase catalyzes the transcription of DNA into RNA using the four ribonucleoside triphosphates as substrates. This Silene latifolia (White campion) protein is DNA-directed RNA polymerase subunit beta.